A 463-amino-acid chain; its full sequence is L-2-hydroxyglutarate dehydrogenase, mitochondrial (463 aa).

A mitochondrion-targeting transit peptide spans M1–I51. N6-acetyllysine is present on residues K104, K155, and K173.

This sequence belongs to the L2HGDH family. FAD is required as a cofactor. As to expression, widely expressed. Highly expressed in brain, testis and muscle. Expressed to a lower extent in lymphocytes, fibroblasts, keratinocytes, placenta, bladder, small intestine, liver and bone marrow.

Its subcellular location is the mitochondrion. The enzyme catalyses (S)-2-hydroxyglutarate + A = 2-oxoglutarate + AH2. The chain is L-2-hydroxyglutarate dehydrogenase, mitochondrial (L2HGDH) from Homo sapiens (Human).